Here is a 610-residue protein sequence, read N- to C-terminus: Solute carrier family 2, facilitated glucose transporter member 12 (610 aa).

Residues 1–49 lie on the Cytoplasmic side of the membrane; it reads MDAPEESIRMTSDPQSKIYVQNPDTHIHLEQGPSAKSGNGRALVLCSVS. The helical transmembrane segment at 50–70 threads the bilayer; sequence VACLSGLLMGYEMSLISGALL. Over 71–84 the chain is Extracellular; that stretch reads QLRDVLTLSCPEQE. The chain crosses the membrane as a helical span at residues 85–105; sequence QVVGSLLLGAFLLSLGGGTIL. Over 106–118 the chain is Cytoplasmic; sequence DHYGRRFTIILTA. The chain crosses the membrane as a helical span at residues 119–139; sequence LLCVLGTLLSVCVVSFWALVV. Over 140 to 141 the chain is Extracellular; it reads GR. A helical membrane pass occupies residues 142 to 162; the sequence is MLVGMSVALSGTASCLYAAEV. The Cytoplasmic segment spans residues 163-176; it reads APAAWRGRCVCVYE. The chain crosses the membrane as a helical span at residues 177–197; sequence LMVVLGMLLGFGLSWAFAGVP. Over 198-201 the chain is Extracellular; the sequence is DGWR. A helical membrane pass occupies residues 202–222; that stretch reads FTFGGALLPALLQAGVMPLLP. Residues 223-286 lie on the Cytoplasmic side of the membrane; the sequence is DSPRFLLAQQ…FQSRDNMLQR (64 aa). Residues 287 to 307 traverse the membrane as a helical segment; sequence LLVGAALVFLQQATGQPNILA. Residues 308–325 lie on the Extracellular side of the membrane; the sequence is YASTVLSSVGFHGNEAAT. A helical transmembrane segment spans residues 326 to 346; sequence LASTGFGVVKVGGTIPAIFLV. At 347-353 the chain is on the cytoplasmic side; the sequence is DKVGPKA. Residues 354-374 traverse the membrane as a helical segment; that stretch reads LLCVGVVVMMLSTATLGAITM. Residues 375–475 lie on the Extracellular side of the membrane; sequence QSRTHVSSLC…LHEVSPSLKW (101 aa). Residues Asn392, Asn429, and Asn438 are each glycosylated (N-linked (GlcNAc...) asparagine). Residues 476–496 traverse the membrane as a helical segment; it reads ISLVSLLVYVAGFSISLGPMV. At 497–511 the chain is on the cytoplasmic side; the sequence is HVVLSAIFPTGIRGK. The chain crosses the membrane as a helical span at residues 512 to 532; the sequence is AVSVISAFNWATNLLISMTFL. The Extracellular segment spans residues 533-542; sequence TLTERIGLPT. Residues 543–563 traverse the membrane as a helical segment; it reads VIFSYSAMSFLLVVFVIVFVP. At 564–610 the chain is on the cytoplasmic side; it reads ETKGRSLEQISKELAMKNHLRGTLLCHRRKHKATAQPSQEEKALATV.

The protein belongs to the major facilitator superfamily. Sugar transporter (TC 2.A.1.1) family. Glucose transporter subfamily. In terms of tissue distribution, expressed in the main insulin-sensitive tissues, such as cardiac muscle, skeletal muscle and adipose tissue.

The protein localises to the cell membrane. The protein resides in the endomembrane system. It is found in the cytoplasm. Its subcellular location is the perinuclear region. It catalyses the reaction D-glucose(out) = D-glucose(in). In terms of biological role, insulin-regulated facilitative glucose transporter. The chain is Solute carrier family 2, facilitated glucose transporter member 12 from Danio rerio (Zebrafish).